The following is a 285-amino-acid chain: ATP synthase gamma chain (285 aa).

Belongs to the ATPase gamma chain family. As to quaternary structure, F-type ATPases have 2 components, CF(1) - the catalytic core - and CF(0) - the membrane proton channel. CF(1) has five subunits: alpha(3), beta(3), gamma(1), delta(1), epsilon(1). CF(0) has three main subunits: a, b and c.

Its subcellular location is the cell membrane. In terms of biological role, produces ATP from ADP in the presence of a proton gradient across the membrane. The gamma chain is believed to be important in regulating ATPase activity and the flow of protons through the CF(0) complex. This chain is ATP synthase gamma chain, found in Geobacillus kaustophilus (strain HTA426).